Reading from the N-terminus, the 130-residue chain is Small ribosomal subunit protein uS9 (130 aa).

The tract at residues 107-130 (DSRKVERKKPGLKKARKASQFSKR) is disordered. Basic residues predominate over residues 111-130 (VERKKPGLKKARKASQFSKR).

Belongs to the universal ribosomal protein uS9 family.

The sequence is that of Small ribosomal subunit protein uS9 from Streptococcus sanguinis (strain SK36).